We begin with the raw amino-acid sequence, 328 residues long: Peroxidase 25 (328 aa).

Residues 1-26 (MGVYLGKYCYIMIIMLVLVLGKEVRS) form the signal peptide. 4 disulfides stabilise this stretch: cysteine 38–cysteine 114, cysteine 71–cysteine 76, cysteine 120–cysteine 324, and cysteine 198–cysteine 230. Histidine 69 serves as the catalytic Proton acceptor. The Ca(2+) site is built by aspartate 70, valine 73, glycine 75, aspartate 77, and serine 79. A substrate-binding site is contributed by proline 161. Histidine 191 serves as a coordination point for heme b. Threonine 192 is a binding site for Ca(2+). An N-linked (GlcNAc...) asparagine glycan is attached at asparagine 207. Ca(2+) contacts are provided by aspartate 243, serine 246, and aspartate 251.

Belongs to the peroxidase family. Classical plant (class III) peroxidase subfamily. Requires heme b as cofactor. It depends on Ca(2+) as a cofactor.

The protein resides in the secreted. It carries out the reaction 2 a phenolic donor + H2O2 = 2 a phenolic radical donor + 2 H2O. Its function is as follows. Removal of H(2)O(2), oxidation of toxic reductants, biosynthesis and degradation of lignin, suberization, auxin catabolism, response to environmental stresses such as wounding, pathogen attack and oxidative stress. These functions might be dependent on each isozyme/isoform in each plant tissue. In Arabidopsis thaliana (Mouse-ear cress), this protein is Peroxidase 25 (PER25).